The chain runs to 167 residues: Male-specific protein scotti (167 aa).

Asparagine 30, asparagine 124, and asparagine 148 each carry an N-linked (GlcNAc...) asparagine glycan.

This sequence belongs to the male-specific scotti family.

In terms of biological role, post-meiotically transcribed gene that has a role in late spermiogenesis; required for actin cone progression during spermatid individualization. The sequence is that of Male-specific protein scotti from Drosophila ananassae (Fruit fly).